The primary structure comprises 279 residues: NADPH-dependent 7-cyano-7-deazaguanine reductase (279 aa).

86-88 (IES) contacts substrate. NADPH is bound at residue 88–89 (SK). Cysteine 187 serves as the catalytic Thioimide intermediate. Aspartate 194 acts as the Proton donor in catalysis. Substrate is bound at residue 226 to 227 (HE). Position 255 to 256 (255 to 256 (RG)) interacts with NADPH.

Belongs to the GTP cyclohydrolase I family. QueF type 2 subfamily. As to quaternary structure, homodimer.

The protein resides in the cytoplasm. The catalysed reaction is 7-aminomethyl-7-carbaguanine + 2 NADP(+) = 7-cyano-7-deazaguanine + 2 NADPH + 3 H(+). It functions in the pathway tRNA modification; tRNA-queuosine biosynthesis. Functionally, catalyzes the NADPH-dependent reduction of 7-cyano-7-deazaguanine (preQ0) to 7-aminomethyl-7-deazaguanine (preQ1). The sequence is that of NADPH-dependent 7-cyano-7-deazaguanine reductase from Actinobacillus pleuropneumoniae serotype 7 (strain AP76).